The following is a 144-amino-acid chain: Large ribosomal subunit protein uL16 (144 aa).

This sequence belongs to the universal ribosomal protein uL16 family. Part of the 50S ribosomal subunit.

In terms of biological role, binds 23S rRNA and is also seen to make contacts with the A and possibly P site tRNAs. This Bacillus licheniformis (strain ATCC 14580 / DSM 13 / JCM 2505 / CCUG 7422 / NBRC 12200 / NCIMB 9375 / NCTC 10341 / NRRL NRS-1264 / Gibson 46) protein is Large ribosomal subunit protein uL16.